A 400-amino-acid chain; its full sequence is Argininosuccinate synthase (400 aa).

Position 8 to 16 (8 to 16) interacts with ATP; the sequence is AYSGGLDTS. Y87 lines the L-citrulline pocket. G117 is an ATP binding site. Residues T119, N123, and D124 each contribute to the L-aspartate site. N123 is a binding site for L-citrulline. L-citrulline contacts are provided by R127, S175, E260, and Y272.

Belongs to the argininosuccinate synthase family. Type 1 subfamily. As to quaternary structure, homotetramer.

The protein resides in the cytoplasm. It catalyses the reaction L-citrulline + L-aspartate + ATP = 2-(N(omega)-L-arginino)succinate + AMP + diphosphate + H(+). Its pathway is amino-acid biosynthesis; L-arginine biosynthesis; L-arginine from L-ornithine and carbamoyl phosphate: step 2/3. This chain is Argininosuccinate synthase, found in Nocardia farcinica (strain IFM 10152).